Reading from the N-terminus, the 217-residue chain is Protein 33K (217 aa).

A disordered region spans residues 1–142 (MPPKGNKQAI…KEKTSAIATR (142 aa)). Residues 24–68 (QWDEEEESWDDSQAEEVSDEEEMESWESLDEELEDKPPKDEEEEI) show a composition bias toward acidic residues. A compositionally biased stretch (low complexity) spans 69 to 78 (IASAAAPSSK). The span at 123-136 (KRSEKTTRPRKEKT) shows a compositional bias: basic and acidic residues. The segment at 160–187 (YAIFQQSRGQQLELKVKNRSLRSLTRSC) is necessary for nuclear subcellular location. Residues 166 to 186 (SRGQQLELKVKNRSLRSLTRS) form an RS-repeat; required for splicing enhancer activity region.

Belongs to the adenoviridae splicing factor family. In terms of assembly, homooligomer. Interacts with DBP; this interaction occurs at a unique vertex during genome packaging. Interacts with IVa2; this interaction occurs at a unique vertex during genome packaging and seems to potentiate IVa2 and 33K oligomerization. Post-translationally, phosphorylated in vitro by human PKA and PRKDC. PRKDC inhibits, whereas PKA activates the splicing factor.

The protein resides in the host nucleus. Its function is as follows. Promotes alternative splicing of late transcripts by promoting splicing at weak 3' splice sites. Required for the temporal activation of major late pre-mRNA splicing at late times of infection. Induces the splicing and expression of the late capsid vertex protein. In terms of biological role, probably functions as the small terminase that is part of the molecular motor that translocates genomic DNA in empty capsid during DNA packaging. This motor is located at a unique vertex and comprises at least the IVa2 ATPase, the small terminase 33K and probably a portal. Forms a ring-like structure of about 17 nm in which genomic DNA is translocated into the capsid. Stimulates IVa2 ATPase activity in the presence of the viral genome. Once the DNA is packaged, the terminase detaches: the 33K protein is present in the empty particles, but not in the mature virions. Also involved in virion assembly. In Human adenovirus F serotype 41 (HAdV-41), this protein is Protein 33K.